Consider the following 682-residue polypeptide: Methionine--tRNA ligase (682 aa).

Residues 15–25 carry the 'HIGH' region motif; that stretch reads PYANGAIHLGH. The Zn(2+) site is built by Cys-146, Cys-149, Cys-159, and Cys-162. Positions 331-335 match the 'KMSKS' region motif; that stretch reads KMSKS. Lys-334 is an ATP binding site. The tRNA-binding domain occupies 580-682; it reads DFAKLDLRVA…QGVKPGMQVK (103 aa).

It belongs to the class-I aminoacyl-tRNA synthetase family. MetG type 1 subfamily. Homodimer. The cofactor is Zn(2+).

Its subcellular location is the cytoplasm. The enzyme catalyses tRNA(Met) + L-methionine + ATP = L-methionyl-tRNA(Met) + AMP + diphosphate. In terms of biological role, is required not only for elongation of protein synthesis but also for the initiation of all mRNA translation through initiator tRNA(fMet) aminoacylation. The protein is Methionine--tRNA ligase of Pasteurella multocida (strain Pm70).